The sequence spans 102 residues: uncharacterized protein (102 aa).

Transmembrane regions (helical) follow at residues 14 to 34, 35 to 55, and 76 to 96; these read IKNWINFIKPIITIVGIVISA, VAFTISILWGMLFLILFLILI, and ILSIIGSIIIISIIVYSHCYI.

It localises to the cell membrane. This is an uncharacterized protein from Methanocaldococcus jannaschii (strain ATCC 43067 / DSM 2661 / JAL-1 / JCM 10045 / NBRC 100440) (Methanococcus jannaschii).